The following is a 368-amino-acid chain: Homoserine O-acetyltransferase (368 aa).

One can recognise an AB hydrolase-1 domain in the interval 43 to 346 (ILLEHALTGT…EYGHDAFLVE (304 aa)). The active-site Nucleophile is the S145. R212 serves as a coordination point for substrate. Active-site residues include D307 and H340. D341 is a substrate binding site.

It belongs to the AB hydrolase superfamily. MetX family. In terms of assembly, homodimer.

The protein resides in the cytoplasm. The catalysed reaction is L-homoserine + acetyl-CoA = O-acetyl-L-homoserine + CoA. Its pathway is amino-acid biosynthesis; L-methionine biosynthesis via de novo pathway; O-acetyl-L-homoserine from L-homoserine: step 1/1. Functionally, transfers an acetyl group from acetyl-CoA to L-homoserine, forming acetyl-L-homoserine. This chain is Homoserine O-acetyltransferase, found in Listeria monocytogenes serovar 1/2a (strain ATCC BAA-679 / EGD-e).